A 122-amino-acid chain; its full sequence is Large ribosomal subunit protein uL14 (122 aa).

This sequence belongs to the universal ribosomal protein uL14 family. In terms of assembly, part of the 50S ribosomal subunit. Forms a cluster with proteins L3 and L19. In the 70S ribosome, L14 and L19 interact and together make contacts with the 16S rRNA in bridges B5 and B8.

Its function is as follows. Binds to 23S rRNA. Forms part of two intersubunit bridges in the 70S ribosome. This is Large ribosomal subunit protein uL14 from Neisseria meningitidis serogroup C (strain 053442).